A 396-amino-acid polypeptide reads, in one-letter code: Inositol polyphosphate multikinase (396 aa).

The segment covering 1–13 (MAAEPPALRLRPP) has biased composition (low complexity). The disordered stretch occupies residues 1 to 22 (MAAEPPALRLRPPGSTGDSPPV). Alanine 2 carries the N-acetylalanine modification. Serine 19 bears the Phosphoserine mark. Lysine 58 is an ATP binding site. Arginine 65 contacts substrate. ATP is bound by residues 114-116 (EDV) and aspartate 127. Residues lysine 129, 143–150 (KIQQQVSK), and glutamine 179 contribute to the substrate site. Positions 300–310 (RHRKLYAKKHQ) match the Nuclear localization signal motif. Aspartate 365 serves as a coordination point for ATP.

Belongs to the inositol phosphokinase (IPK) family. It depends on Mg(2+) as a cofactor. Highly expressed in kidney, and at lower levels in hippocampus, brain cortex, cerebellum, heart and lung.

It localises to the nucleus. It carries out the reaction 1D-myo-inositol 1,4,5-trisphosphate + 2 ATP = 1D-myo-inositol 1,3,4,5,6-pentakisphosphate + 2 ADP + 2 H(+). The catalysed reaction is 1D-myo-inositol 1,3,4,6-tetrakisphosphate + ATP = 1D-myo-inositol 1,3,4,5,6-pentakisphosphate + ADP + H(+). It catalyses the reaction 1-octadecanoyl-2-(5Z,8Z,11Z,14Z)-eicosatetraenoyl-sn-glycero-3-phospho-1D-myo-inositol 4,5-bisphosphate + ATP = 1-octadecanoyl-2-(5Z,8Z,11Z,14Z-eicosatetraenoyl)-sn-glycero-3-phospho-(1D-myo-inositol 3,4,5-triphosphate) + ADP + H(+). The enzyme catalyses a 1,2-diacyl-sn-glycero-3-phospho-(1D-myo-inositol-4,5-bisphosphate) + ATP = a 1,2-diacyl-sn-glycero-3-phospho-(1D-myo-inositol-3,4,5-trisphosphate) + ADP + H(+). It carries out the reaction 1D-myo-inositol 1,4,5,6-tetrakisphosphate + ATP = 1D-myo-inositol 1,3,4,5,6-pentakisphosphate + ADP + H(+). Its pathway is phospholipid metabolism; phosphatidylinositol metabolism. Inositol phosphate kinase with a broad substrate specificity. Phosphorylates inositol 1,4,5-trisphosphate (Ins(1,4,5)P3) first to inositol 1,3,4,5-tetrakisphosphate and then to inositol 1,3,4,5,6-pentakisphosphate (Ins(1,3,4,5,6)P5). Phosphorylates inositol 1,3,4,6-tetrakisphosphate (Ins(1,3,4,6)P4). Phosphorylates inositol 1,4,5,6-tetrakisphosphate (Ins(1,4,5,6)P4). Phosphorylates glycero-3-phospho-1D-myo-inositol 4,5-bisphosphate to glycero-3-phospho-1D-myo-inositol 3,4,5-trisphosphate. Plays an important role in MLKL-mediated necroptosis via its role in the biosynthesis of inositol pentakisphosphate (InsP5) and inositol hexakisphosphate (InsP6). Binding of these highly phosphorylated inositol phosphates to MLKL mediates the release of an N-terminal auto-inhibitory region, leading to activation of the kinase. Essential for activated phospho-MLKL to oligomerize and localize to the cell membrane during necroptosis. Required for normal embryonic development, probably via its role in the biosynthesis of inositol 1,3,4,5,6-pentakisphosphate (Ins(1,3,4,5,6)P5) and inositol hexakisphosphate (InsP6). The sequence is that of Inositol polyphosphate multikinase (Ipmk) from Rattus norvegicus (Rat).